Reading from the N-terminus, the 606-residue chain is Flagellar WD repeat-containing protein Pf20 (606 aa).

The disordered stretch occupies residues 229–250 (PLPGAERSLGGQSTAAAGGGAS). WD repeat units follow at residues 324 to 354 (GHLL…KMWH), 366 to 396 (GHKD…KIWD), 408 to 438 (DHKQ…RLWD), 450 to 480 (GHVD…SVWD), 492 to 522 (GHQN…KLWD), 534 to 564 (TGKH…KAYS), and 576 to 606 (GHED…RLWS).

Inter-microtubule bridges in flagella.

Its subcellular location is the cell projection. It is found in the cilium. The protein localises to the flagellum. This Chlamydomonas reinhardtii (Chlamydomonas smithii) protein is Flagellar WD repeat-containing protein Pf20 (PF20).